The sequence spans 125 residues: Small ribosomal subunit protein bS6 (125 aa).

Residues 101–125 (PMMKEEKAKNLLAPQSDAAEPTAAA) are disordered.

This sequence belongs to the bacterial ribosomal protein bS6 family.

Functionally, binds together with bS18 to 16S ribosomal RNA. The protein is Small ribosomal subunit protein bS6 of Laribacter hongkongensis (strain HLHK9).